A 188-amino-acid polypeptide reads, in one-letter code: Photosystem I assembly protein Ycf4 (188 aa).

Transmembrane regions (helical) follow at residues 28–48 (WATVITIGGTGFFLAGLSSYL) and 68–88 (IAIGFYGVAALLLAIYLWATI).

It belongs to the Ycf4 family.

It localises to the cellular thylakoid membrane. In terms of biological role, seems to be required for the assembly of the photosystem I complex. The protein is Photosystem I assembly protein Ycf4 of Cyanothece sp. (strain PCC 7425 / ATCC 29141).